The following is a 380-amino-acid chain: Glucose-1-phosphate adenylyltransferase (380 aa).

Alpha-D-glucose 1-phosphate is bound by residues Gly-164, 179 to 180 (EK), and Ser-190.

Belongs to the bacterial/plant glucose-1-phosphate adenylyltransferase family. Homotetramer.

The catalysed reaction is alpha-D-glucose 1-phosphate + ATP + H(+) = ADP-alpha-D-glucose + diphosphate. It functions in the pathway glycan biosynthesis; glycogen biosynthesis. Functionally, involved in the biosynthesis of ADP-glucose, a building block required for the elongation reactions to produce glycogen. Catalyzes the reaction between ATP and alpha-D-glucose 1-phosphate (G1P) to produce pyrophosphate and ADP-Glc. This is Glucose-1-phosphate adenylyltransferase from Streptococcus pneumoniae (strain Hungary19A-6).